The chain runs to 284 residues: Serine protease 57 (284 aa).

An N-terminal signal peptide occupies residues 1–35 (MPSSTAMVPGTRGGWHCLVLTTAAALTQLMWLPGC). Positions 40 to 269 (IVGGHEVTPH…FVTWIWDVVR (230 aa)) constitute a Peptidase S1 domain. Cys-65 and Cys-81 form a disulfide bridge. Catalysis depends on charge relay system residues His-80 and Asp-128. N-linked (GlcNAc...) asparagine glycosylation occurs at Asn-135. 3 disulfide bridges follow: Cys-163–Cys-230, Cys-194–Cys-208, and Cys-220–Cys-245. The Charge relay system role is filled by Ser-224.

Belongs to the peptidase S1 family. In terms of processing, after cleavage of the signal peptide, the N-terminus is probably further processed by CTSC. Processing by CTSC is probably required for accumulation in cytoplasmic granules; in the absence of CTSC the protein does not accumulate. Post-translationally, N-glycosylated.

Its subcellular location is the cytoplasmic granule lumen. The protein resides in the secreted. Serine protease that cleaves preferentially after Arg residues. Can also cleave after citrulline (deimidated arginine) and methylarginine residues. The protein is Serine protease 57 (Prss57) of Mus musculus (Mouse).